The primary structure comprises 1310 residues: Vacuolating cytotoxin autotransporter (1310 aa).

The signal sequence occupies residues 1 to 30 (MEIQQTHRKINRPIISLALVGVLMGTELGA). Residues 339-364 (PEGGYESKTKDNPQNNPKNDAQKTEI) are disordered. The span at 350 to 364 (NPQNNPKNDAQKTEI) shows a compositional bias: polar residues. Residues 1038–1310 (KYEKPTNVWA…ASNLGMRYSF (273 aa)) enclose the Autotransporter domain.

The protein localises to the periplasm. It localises to the secreted. The protein resides in the cell surface. Its subcellular location is the cell outer membrane. Induces vacuolation of eukaryotic cells. Causes ulceration and gastric lesions. This is Vacuolating cytotoxin autotransporter (vacA) from Helicobacter pylori (Campylobacter pylori).